A 527-amino-acid chain; its full sequence is Zinc finger CCCH-type with G patch domain-containing protein (527 aa).

Residues 97–126 (GEVSGSSSDMREREDEREEEDDGEVEGEVD) are disordered. Residues 111–125 (DEREEEDDGEVEGEV) show a composition bias toward acidic residues. A C3H1-type zinc finger spans residues 173–200 (QKSMKPCPFFLEDKCRFADNCRFSHGEV). Residues 268–312 (LREDDLPSCSDSEDDDNGEGEAAFPRVLTQEEDWAPSRSSSAFGG) are disordered. The G-patch domain maps to 317-363 (TRGIGSKLMLKMGYEYGKGLGKTSEGRVEPVLAVVLPKGKSLDQCAE). Disordered regions lie at residues 369–396 (TQRK…AHNT), 410–444 (LGNG…YKGG), and 505–527 (KAQE…MTEF). Residues 384-393 (RNKRTRKARA) are compositionally biased toward basic residues. A compositionally biased stretch (basic and acidic residues) spans 511–527 (AQRENRKADTHKKMTEF).

It localises to the nucleus. In terms of biological role, transcription repressor that specifically binds the 5'-GGAG[GA]A[GA]A-3' consensus sequence. Represses transcription by recruiting the chromatin multiprotein complex NuRD to target promoters. Negatively regulates expression of EGFR, a gene involved in cell proliferation, survival and migration. The protein is Zinc finger CCCH-type with G patch domain-containing protein (zgpat) of Salmo salar (Atlantic salmon).